The following is a 398-amino-acid chain: Protein CDKN2AIP homolog A (398 aa).

An XRN2-binding (XTBD) domain is found at 19-124 (LELVHGECES…KVKKRGISSS (106 aa)). Residues 118–245 (KRGISSSNEG…SDNALKPTRR (128 aa)) are disordered. The segment covering 131-147 (EPCKKQKSSDHGERESS) has biased composition (basic and acidic residues). Polar residues-rich tracts occupy residues 154 to 163 (SDGNVPSTSL), 189 to 199 (RRSLPVSNAKS), and 226 to 238 (QTSM…SSDN).

It belongs to the CARF family.

It is found in the nucleus. The protein localises to the nucleoplasm. Functionally, may regulate DNA damage response and cell proliferation. This chain is Protein CDKN2AIP homolog A (cdkn2aip-a), found in Xenopus laevis (African clawed frog).